We begin with the raw amino-acid sequence, 2215 residues long: MVILQQGDHVWMDLRLGQEFDVPIGAVVKLCDSGQVQVVDDEDNEHWISPQNATHIKPMHPTSVHGVEDMIRLGDLNEAGILRNLLIRYRDHLIYTYTGSILVAVNPYQLLSIYSPEHIRQYTNKKIGEMPPHIFAIADNCYFNMKRNSRDQCCIISGESGAGKTESTKLILQFLAAISGQHSWIEQQVLEATPILEAFGNAKTIRNDNSSRFGKYIDIHFNKRGAIEGAKIEQYLLEKSRVCRQALDERNYHVFYCMLEGMSEDQKKKLGLGQASDYNYLAMGNCITCEGRVDSQEYANIRSAMKVLMFTDTENWEISKLLAAILHLGNLQYEARTFENLDACEVLFSPSLATAASLLEVNPPDLMSCLTSRTLITRGETVSTPLSREQALDVRDAFVKGIYGRLFVWIVDKINAAIYKPPSQDVKNSRRSIGLLDIFGFENFAVNSFEQLCINFANEHLQQFFVRHVFKLEQEEYDLESIDWLHIEFTDNQDALDMIANKPMNIISLIDEESKFPKGTDTTMLHKLNSQHKLNANYIPPKNNHETQFGINHFAGIVYYETQGFLEKNRDTLHGDIIQLVHSSRNKFIKQIFQADVAMGAETRKRSPTLSSQFKRSLELLMRTLGACQPFFVRCIKPNEFKKPMLFDRHLCVRQLRYSGMMETIRIRRAGYPIRYSFVEFVERYRVLLPGVKPAYKQGDLRGTCQRMAEAVLGTHDDWQIGKTKIFLKDHHDMLLEVERDKAITDRVILLQKVIRGFKDRSNFLKLKNAATLIQRHWRGHNCRKNYGLMRLGFLRLQALHRSRKLHQQYRLARQRIIQFQARCRAYLVRKAFRHRLWAVLTVQAYARGMIARRLHQRLRAEYLWRLEAEKMRLAEEEKLRKEMSAKKAKEEAERKHQERLAQLAREDAERELKEKEAARRKKELLEQMERARHEPVNHSDMVDKMFGFLGTSGGLPGQEGQAPSGFEDLERGRREMVEEDLDAALPLPDEDEEDLSEYKFAKFAATYFQGTTTHSYTRRPLKQPLLYHDDEGDQLAALAVWITILRFMGDLPEPKYHTAMSDGSEKIPVMTKIYETLGKKTYKRELQALQGEGEAQLPEGQKKSSVRHKLVHLTLKKKSKLTEEVTKRLHDGESTVQGNSMLEDRPTSNLEKLHFIIGNGILRPALRDEIYCQISKQLTHNPSKSSYARGWILVSLCVGCFAPSEKFVKYLRNFIHGGPPGYAPYCEERLRRTFVNGTRTQPPSWLELQATKSKKPIMLPVTFMDGTTKTLLTDSATTAKELCNALADKISLKDRFGFSLYIALFDKVSSLGSGSDHVMDAISQCEQYAKEQGAQERNAPWRLFFRKEVFTPWHSPSEDNVATNLIYQQVVRGVKFGEYRCEKEDDLAELASQQYFVDYGSEMILERLLNLVPTYIPDREITPLKTLEKWAQLAIAAHKKGIYAQRRTDAQKVKEDVVSYARFKWPLLFSRFYEAYKFSGPSLPKNDVIVAVNWTGVYFVDEQEQVLLELSFPEIMAVSSSRECRVWLSLGCSDLGCAAPHSGWAGLTPAGPCSPCWSCRGAKTTAPSFTLATIKGDEYTFTSSNAEDIRDLVVTFLEGLRKRSKYVVALQDNPNPAGEESGFLSFAKGDLIILDHDTGEQVMNSGWANGINERTKQRGDFPTDSVYVMPTVTMPPREIVALVTMTPDQRQDVVRLLQLRTAEPEVRAKPYTLEEFSYDYFRPPPKHTLSRVMVSKARGKDRLWSHTREPLKQALLKKLLGSEELSQEACLAFIAVLKYMGDYPSKRTRSVNELTDQIFEGPLKAEPLKDEAYVQILKQLTDNHIRYSEERGWELLWLCTGLFPPSNILLPHVQRFLQSRKHCPLAIDCLQRLQKALRNGSRKYPPHLVEVEAIQHKTTQIFHKVYFPDDTDEAFEVESSTKAKDFCQNIATRLLLKSSEGFSLFVKIADKVLSVPENDFFFDFVRHLTDWIKKARPIKDGIVPSLTYQVFFMKKLWTTTVPGKDPMADSIFHYYQELPKYLRGYHKCTREEVLQLGALIYRVKFEEDKSYFPSIPKLLRELVPQDLIRQVSPDDWKRSIVAYFNKHAGKSKEEAKLAFLKLIFKWPTFGSAFFEVKQTTEPNFPEILLIAINKYGVSLIDPKTKDILTTHPFTKISNWSSGNTYFHITIGNLVRGSKLLCETSLGYKMDDLLTSYISQMLTAMSKQRGSRSGK.

The 677-residue stretch at 65-741 (HGVEDMIRLG…HDMLLEVERD (677 aa)) folds into the Myosin motor domain. 158 to 165 (GESGAGKT) is a binding site for ATP. Residues 632 to 639 (FVRCIKPN) are actin-binding. IQ domains are found at residues 745 to 765 (TDRVILLQKVIRGFKDRSNFL), 768 to 788 (KNAATLIQRHWRGHNCRKNYG), 791 to 811 (RLGFLRLQALHRSRKLHQQYR), 814 to 834 (RQRIIQFQARCRAYLVRKAFR), and 837 to 857 (LWAVLTVQAYARGMIARRLHQ). The segment at 858–935 (RLRAEYLWRL…LEQMERARHE (78 aa)) is SAH. One can recognise a MyTH4 1 domain in the interval 1017–1253 (YTRRPLKQPL…PSWLELQATK (237 aa)). The FERM 1 domain occupies 1258-1602 (IMLPVTFMDG…LVVTFLEGLR (345 aa)). Ser1569 is subject to Phosphoserine. Thr1571 carries the phosphothreonine modification. Residues 1603-1672 (KRSKYVVALQ…PTDSVYVMPT (70 aa)) enclose the SH3 domain. A MyTH4 2 domain is found at 1747-1896 (HTREPLKQAL…PHLVEVEAIQ (150 aa)). The region spanning 1902-2205 (IFHKVYFPDD…SYISQMLTAM (304 aa)) is the FERM 2 domain.

It belongs to the TRAFAC class myosin-kinesin ATPase superfamily. Myosin family. As to quaternary structure, might homodimerize in a two headed molecule through the formation of a coiled-coil rod. Identified in a complex with USH1C and USH1G. Interacts with MYRIP. Interacts with RPE65. Interacts with CIB2. May interact with CALM. Interacts with WHRN. Interacts with PLEKHB1 (via PH domain). Interacts with PCDH15. Interacts with TWF2. Interacts with USH1G. Interacts with MYH9. Interacts (via MyTH4-FERM domains) with cytoplasmic regions of ADGRV1 and USH2A. Interacts with PDZD7 (via MyTH4-FERM domains). Interacts with CALML4. As to expression, expressed in the pigment epithelium and the photoreceptor cells of the retina. Also found in kidney, liver, testis, cochlea, lymphocytes. Not expressed in brain.

It is found in the cytoplasm. It localises to the cell cortex. Its subcellular location is the cytoskeleton. The protein localises to the synapse. With respect to regulation, ATP hydrolysis is inhibited by Mg(2+), already at a concentration of 0.4 mM. Its function is as follows. Myosins are actin-based motor molecules with ATPase activity. Unconventional myosins serve in intracellular movements. Their highly divergent tails bind to membranous compartments, which are then moved relative to actin filaments. In the retina, plays an important role in the renewal of the outer photoreceptor disks. Plays an important role in the distribution and migration of retinal pigment epithelial (RPE) melanosomes and phagosomes, and in the regulation of opsin transport in retinal photoreceptors. In the inner ear, plays an important role in differentiation, morphogenesis and organization of cochlear hair cell bundles. Involved in hair-cell vesicle trafficking of aminoglycosides, which are known to induce ototoxicity. Motor protein that is a part of the functional network formed by USH1C, USH1G, CDH23 and MYO7A that mediates mechanotransduction in cochlear hair cells. Required for normal hearing. In Homo sapiens (Human), this protein is Unconventional myosin-VIIa.